The primary structure comprises 536 residues: Lysosomal acid glucosylceramidase (536 aa).

Positions Met1 to Gly39 are cleaved as a signal peptide. Disulfide bonds link Cys43/Cys55 and Cys57/Cys62. 3 N-linked (GlcNAc...) asparagine glycosylation sites follow: Asn58, Asn98, and Asn185. Glu274 serves as the catalytic Proton donor. A glycan (N-linked (GlcNAc...) asparagine) is linked at Asn309. The Nucleophile role is filled by Glu379. Asn501 carries an N-linked (GlcNAc...) asparagine glycan.

The protein belongs to the glycosyl hydrolase 30 family. Interacts with saposin-C. Interacts with SCARB2. Interacts with TCP1. Interacts with GRN; this interaction prevents aggregation of GBA1-SCARB2 complex via interaction with HSPA1A upon stress.

Its subcellular location is the lysosome membrane. The catalysed reaction is a beta-D-glucosyl-(1&lt;-&gt;1')-N-acylsphing-4-enine + H2O = an N-acylsphing-4-enine + D-glucose. It catalyses the reaction a beta-D-galactosyl-(1&lt;-&gt;1')-N-acylsphing-4-enine + H2O = an N-acylsphing-4-enine + D-galactose. The enzyme catalyses cholesteryl 3-beta-D-glucoside + H2O = cholesterol + D-glucose. It carries out the reaction a beta-D-glucosyl-(1&lt;-&gt;1')-N-acylsphing-4-enine + cholesterol = cholesteryl 3-beta-D-glucoside + an N-acylsphing-4-enine. The catalysed reaction is beta-D-glucosyl-N-(9Z-octadecenoyl)-sphing-4E-enine + cholesterol = N-(9Z-octadecenoyl)-sphing-4-enine + cholesteryl 3-beta-D-glucoside. It catalyses the reaction beta-D-glucosyl-N-octanoylsphing-4E-enine + cholesterol = N-octanoylsphing-4-enine + cholesteryl 3-beta-D-glucoside. The enzyme catalyses beta-D-glucosyl-N-dodecanoylsphing-4-enine + cholesterol = N-dodecanoylsphing-4-enine + cholesteryl 3-beta-D-glucoside. It carries out the reaction beta-D-glucosyl-(1&lt;-&gt;1)-N-octadecanoylsphing-4-enine + cholesterol = N-octadecanoylsphing-4-enine + cholesteryl 3-beta-D-glucoside. The catalysed reaction is beta-D-glucosyl-(1&lt;-&gt;1')-N-(15Z-tetracosenoyl)-sphing-4-enine + cholesterol = N-(15Z-tetracosenoyl)-sphing-4-enine + cholesteryl 3-beta-D-glucoside. It catalyses the reaction a beta-D-galactosyl-(1&lt;-&gt;1')-N-acylsphing-4-enine + cholesterol = cholesteryl 3-beta-D-galactoside + an N-acylsphing-4-enine. The enzyme catalyses 1-(beta-D-galactosyl)-N-dodecanoylsphing-4-enine + cholesterol = cholesteryl 3-beta-D-galactoside + N-dodecanoylsphing-4-enine. It carries out the reaction a beta-D-xylosyl-(1&lt;-&gt;1')-N-acylsphing-4-enine + cholesterol = cholesteryl 3-beta-D-xyloside + an N-acylsphing-4-enine. The catalysed reaction is beta-D-xylosyl-(1&lt;-&gt;1')-N-(9Z-octadecenoyl)-sphing-4-enine + cholesterol = cholesteryl 3-beta-D-xyloside + N-(9Z-octadecenoyl)-sphing-4-enine. It participates in steroid metabolism; cholesterol metabolism. The protein operates within sphingolipid metabolism. In terms of biological role, glucosylceramidase that catalyzes, within the lysosomal compartment, the hydrolysis of glucosylceramides/GlcCers (such as beta-D-glucosyl-(1&lt;-&gt;1')-N-acylsphing-4-enine) into free ceramides (such as N-acylsphing-4-enine) and glucose. Plays a central role in the degradation of complex lipids and the turnover of cellular membranes. Through the production of ceramides, participates in the PKC-activated salvage pathway of ceramide formation. Catalyzes the glucosylation of cholesterol, through a transglucosylation reaction where glucose is transferred from GlcCer to cholesterol. GlcCer containing mono-unsaturated fatty acids (such as beta-D-glucosyl-N-(9Z-octadecenoyl)-sphing-4-enine) are preferred as glucose donors for cholesterol glucosylation when compared with GlcCer containing same chain length of saturated fatty acids (such as beta-D-glucosyl-N-octadecanoyl-sphing-4-enine). Under specific conditions, may alternatively catalyze the reverse reaction, transferring glucose from cholesteryl 3-beta-D-glucoside to ceramide. Can also hydrolyze cholesteryl 3-beta-D-glucoside producing glucose and cholesterol. Catalyzes the hydrolysis of galactosylceramides/GalCers (such as beta-D-galactosyl-(1&lt;-&gt;1')-N-acylsphing-4-enine), as well as the transfer of galactose between GalCers and cholesterol in vitro, but with lower activity than with GlcCers. Contrary to GlcCer and GalCer, xylosylceramide/XylCer (such as beta-D-xyosyl-(1&lt;-&gt;1')-N-acylsphing-4-enine) is not a good substrate for hydrolysis, however it is a good xylose donor for transxylosylation activity to form cholesteryl 3-beta-D-xyloside. This chain is Lysosomal acid glucosylceramidase (GBA1), found in Pan troglodytes (Chimpanzee).